A 276-amino-acid polypeptide reads, in one-letter code: Diaminopimelate epimerase (276 aa).

Substrate contacts are provided by N13, Q46, and N66. C75 acts as the Proton donor in catalysis. Substrate contacts are provided by residues 76–77, N159, N192, and 210–211; these read GN and ER. C219 (proton acceptor) is an active-site residue. Position 220–221 (220–221) interacts with substrate; the sequence is GS.

This sequence belongs to the diaminopimelate epimerase family. In terms of assembly, homodimer.

The protein localises to the cytoplasm. It carries out the reaction (2S,6S)-2,6-diaminopimelate = meso-2,6-diaminopimelate. The protein operates within amino-acid biosynthesis; L-lysine biosynthesis via DAP pathway; DL-2,6-diaminopimelate from LL-2,6-diaminopimelate: step 1/1. In terms of biological role, catalyzes the stereoinversion of LL-2,6-diaminopimelate (L,L-DAP) to meso-diaminopimelate (meso-DAP), a precursor of L-lysine and an essential component of the bacterial peptidoglycan. This is Diaminopimelate epimerase from Pseudoalteromonas atlantica (strain T6c / ATCC BAA-1087).